A 634-amino-acid chain; its full sequence is UPF0329 protein ECU11_2090 (634 aa).

2 stretches are compositionally biased toward basic and acidic residues: residues 354–365 (REEREKREESKG) and 397–407 (GESKEEDRGEE). The tract at residues 354–438 (REEREKREES…KGSGEKRISE (85 aa)) is disordered. Residues 408–417 (GGVEAEDPLE) show a composition bias toward acidic residues.

This sequence belongs to the UPF0329 family.

In Encephalitozoon cuniculi (strain GB-M1) (Microsporidian parasite), this protein is UPF0329 protein ECU11_2090.